We begin with the raw amino-acid sequence, 116 residues long: MAGRSGDRDEDLLKAVRLIKILYQSNPPPSPEGTRQARRNRRRRWRARQRQIHSIGERILSTYLGRSEEPVPLQLPPLERLNLNCSEDCGTSGTQGVGSPQISVESPTVLESGTEE.

S5 is modified (phosphoserine; by host CK2). Positions 18–26 (LIKILYQSN) are homomultimerization. The disordered stretch occupies residues 23–49 (YQSNPPPSPEGTRQARRNRRRRWRARQ). The Nuclear localization signal and RNA-binding (RRE) signature appears at 34–50 (TRQARRNRRRRWRARQR). Positions 36–49 (QARRNRRRRWRARQ) are enriched in basic residues. The Nuclear export signal and binding to XPO1 signature appears at 73-84 (LQLPPLERLNLN). Residues 86–116 (SEDCGTSGTQGVGSPQISVESPTVLESGTEE) form a disordered region. S92 and S99 each carry phosphoserine; by host.

Belongs to the HIV-1 REV protein family. As to quaternary structure, homomultimer; when bound to the RRE. Multimeric assembly is essential for activity and may involve XPO1. Binds to human KPNB1, XPO1, TNPO1, RANBP5 and IPO7. Interacts with the viral Integrase. Interacts with human KHDRBS1. Interacts with human NAP1; this interaction decreases Rev multimerization and stimulates its activity. Interacts with human DEAD-box helicases DDX3 and DDX24; these interactions may serve for viral RNA export to the cytoplasm and packaging, respectively. Interacts with human PSIP1; this interaction may inhibit HIV-1 DNA integration by promoting dissociation of the Integrase-LEDGF/p75 complex. Asymmetrically arginine dimethylated at one site by host PRMT6. Methylation impairs the RNA-binding activity and export of viral RNA from the nucleus to the cytoplasm. In terms of processing, phosphorylated by protein kinase CK2. Presence of, and maybe binding to the N-terminus of the regulatory beta subunit of CK2 is necessary for CK2-mediated Rev's phosphorylation.

The protein resides in the host nucleus. Its subcellular location is the host nucleolus. It is found in the host cytoplasm. Functionally, escorts unspliced or incompletely spliced viral pre-mRNAs (late transcripts) out of the nucleus of infected cells. These pre-mRNAs carry a recognition sequence called Rev responsive element (RRE) located in the env gene, that is not present in fully spliced viral mRNAs (early transcripts). This function is essential since most viral proteins are translated from unspliced or partially spliced pre-mRNAs which cannot exit the nucleus by the pathway used by fully processed cellular mRNAs. Rev itself is translated from a fully spliced mRNA that readily exits the nucleus. Rev's nuclear localization signal (NLS) binds directly to KPNB1/Importin beta-1 without previous binding to KPNA1/Importin alpha-1. KPNB1 binds to the GDP bound form of RAN (Ran-GDP) and targets Rev to the nucleus. In the nucleus, the conversion from Ran-GDP to Ran-GTP dissociates Rev from KPNB1 and allows Rev's binding to the RRE in viral pre-mRNAs. Rev multimerization on the RRE via cooperative assembly exposes its nuclear export signal (NES) to the surface. Rev can then form a complex with XPO1/CRM1 and Ran-GTP, leading to nuclear export of the complex. Conversion from Ran-GTP to Ran-GDP mediates dissociation of the Rev/RRE/XPO1/RAN complex, so that Rev can return to the nucleus for a subsequent round of export. Beside KPNB1, also seems to interact with TNPO1/Transportin-1, RANBP5/IPO5 and IPO7/RANBP7 for nuclear import. The nucleoporin-like HRB/RIP is an essential cofactor that probably indirectly interacts with Rev to release HIV RNAs from the perinuclear region to the cytoplasm. The polypeptide is Protein Rev (Homo sapiens (Human)).